A 399-amino-acid polypeptide reads, in one-letter code: Succinyl-diaminopimelate desuccinylase (399 aa).

Residue H80 participates in Zn(2+) binding. D82 is an active-site residue. Residue D113 coordinates Zn(2+). E147 acts as the Proton acceptor in catalysis. Zn(2+) contacts are provided by E148, E176, and H366.

This sequence belongs to the peptidase M20A family. DapE subfamily. As to quaternary structure, homodimer. Zn(2+) serves as cofactor. The cofactor is Co(2+).

The catalysed reaction is N-succinyl-(2S,6S)-2,6-diaminopimelate + H2O = (2S,6S)-2,6-diaminopimelate + succinate. The protein operates within amino-acid biosynthesis; L-lysine biosynthesis via DAP pathway; LL-2,6-diaminopimelate from (S)-tetrahydrodipicolinate (succinylase route): step 3/3. Functionally, catalyzes the hydrolysis of N-succinyl-L,L-diaminopimelic acid (SDAP), forming succinate and LL-2,6-diaminopimelate (DAP), an intermediate involved in the bacterial biosynthesis of lysine and meso-diaminopimelic acid, an essential component of bacterial cell walls. This is Succinyl-diaminopimelate desuccinylase from Colwellia psychrerythraea (strain 34H / ATCC BAA-681) (Vibrio psychroerythus).